The chain runs to 245 residues: 1-(5-phosphoribosyl)-5-[(5-phosphoribosylamino)methylideneamino] imidazole-4-carboxamide isomerase (245 aa).

Catalysis depends on Asp-7, which acts as the Proton acceptor. The active-site Proton donor is Asp-129.

This sequence belongs to the HisA/HisF family.

The protein localises to the cytoplasm. It catalyses the reaction 1-(5-phospho-beta-D-ribosyl)-5-[(5-phospho-beta-D-ribosylamino)methylideneamino]imidazole-4-carboxamide = 5-[(5-phospho-1-deoxy-D-ribulos-1-ylimino)methylamino]-1-(5-phospho-beta-D-ribosyl)imidazole-4-carboxamide. It functions in the pathway amino-acid biosynthesis; L-histidine biosynthesis; L-histidine from 5-phospho-alpha-D-ribose 1-diphosphate: step 4/9. This chain is 1-(5-phosphoribosyl)-5-[(5-phosphoribosylamino)methylideneamino] imidazole-4-carboxamide isomerase, found in Yersinia pestis bv. Antiqua (strain Antiqua).